Reading from the N-terminus, the 680-residue chain is Methionine--tRNA ligase (680 aa).

The 'HIGH' region signature appears at 15–25; it reads PYANGPVHIGH. The Zn(2+) site is built by cysteine 147, cysteine 150, cysteine 160, and cysteine 163. A 'KMSKS' region motif is present at residues 332–336; it reads KISTS. Threonine 335 contributes to the ATP binding site. Residues 579–680 form the tRNA-binding domain; sequence DFLKLDIRVG…AEVAAGSQVK (102 aa).

It belongs to the class-I aminoacyl-tRNA synthetase family. MetG type 1 subfamily. In terms of assembly, homodimer. It depends on Zn(2+) as a cofactor.

The protein localises to the cytoplasm. It carries out the reaction tRNA(Met) + L-methionine + ATP = L-methionyl-tRNA(Met) + AMP + diphosphate. Its function is as follows. Is required not only for elongation of protein synthesis but also for the initiation of all mRNA translation through initiator tRNA(fMet) aminoacylation. This chain is Methionine--tRNA ligase, found in Porphyromonas gingivalis (strain ATCC BAA-308 / W83).